We begin with the raw amino-acid sequence, 457 residues long: Polygalacturonase-2 (457 aa).

An N-terminal signal peptide occupies residues Met-1–Ser-24. Residues Asn-25–Asn-71 constitute a propeptide that is removed on maturation. N-linked (GlcNAc...) asparagine glycosylation is found at Asn-189 and Asn-240. PbH1 repeat units lie at residues Ser-228 to Asn-255 and Thr-256 to Ser-277. Asp-270 functions as the Proton donor in the catalytic mechanism. An N-linked (GlcNAc...) asparagine glycan is attached at Asn-286. Residue His-293 is part of the active site. PbH1 repeat units lie at residues Val-309–Thr-330 and Ala-338–Gln-359. Asn-311 is a glycosylation site (N-linked (GlcNAc...) asparagine). The propeptide occupies Leu-445–Tyr-457.

It belongs to the glycosyl hydrolase 28 family. In terms of assembly, monomer PG2 (isoenzymes PG2A and PG2B). Also forms heterodimers called polygalacturonase 1 (PG1) with the beta subunit GP1. In terms of processing, N-glycosylated. PG2B isozyme has a greater degree of glycosylation than PG2A. As to expression, expressed only in ripening fruits (at protein level).

The protein resides in the secreted. It localises to the extracellular space. Its subcellular location is the apoplast. The protein localises to the cell wall. It catalyses the reaction (1,4-alpha-D-galacturonosyl)n+m + H2O = (1,4-alpha-D-galacturonosyl)n + (1,4-alpha-D-galacturonosyl)m.. Its function is as follows. Catalytic subunit of the polygalacturonase isozyme 1 and 2 (PG1 and PG2). Acts in concert with the pectinesterase, in the ripening process. Is involved in cell wall metabolism, specifically in polyuronide degradation. The depolymerization and solubilization of cell wall polyuronides mediated by PG2 during ripening seems to be limited by the beta subunit GP1, probably by recruiting PG2 to form PG1. This chain is Polygalacturonase-2 (PG2), found in Solanum lycopersicum (Tomato).